The chain runs to 156 residues: 6,7-dimethyl-8-ribityllumazine synthase (156 aa).

5-amino-6-(D-ribitylamino)uracil contacts are provided by residues phenylalanine 23, 57–59 (AYE), and 81–83 (AII). 86–87 (GT) serves as a coordination point for (2S)-2-hydroxy-3-oxobutyl phosphate. Catalysis depends on histidine 89, which acts as the Proton donor. Phenylalanine 114 lines the 5-amino-6-(D-ribitylamino)uracil pocket. A (2S)-2-hydroxy-3-oxobutyl phosphate-binding site is contributed by arginine 128.

This sequence belongs to the DMRL synthase family.

It catalyses the reaction (2S)-2-hydroxy-3-oxobutyl phosphate + 5-amino-6-(D-ribitylamino)uracil = 6,7-dimethyl-8-(1-D-ribityl)lumazine + phosphate + 2 H2O + H(+). Its pathway is cofactor biosynthesis; riboflavin biosynthesis; riboflavin from 2-hydroxy-3-oxobutyl phosphate and 5-amino-6-(D-ribitylamino)uracil: step 1/2. Functionally, catalyzes the formation of 6,7-dimethyl-8-ribityllumazine by condensation of 5-amino-6-(D-ribitylamino)uracil with 3,4-dihydroxy-2-butanone 4-phosphate. This is the penultimate step in the biosynthesis of riboflavin. The sequence is that of 6,7-dimethyl-8-ribityllumazine synthase from Helicobacter acinonychis (strain Sheeba).